The chain runs to 254 residues: Protein GltF (254 aa).

The N-terminal stretch at 1–25 is a signal peptide; it reads MFFKKNLTTAAICAALSVAAFSAMA. The helical transmembrane segment at 213-229 threads the bilayer; the sequence is PVAITAVTFPLLIDAAV.

The protein to E.coli YhcF.

Its subcellular location is the cell membrane. In terms of biological role, involved in induction of the so-called NTR enzymes in response to nitrogen deprivation, as well as in glutamate biosynthesis. May mediate the glutamate-dependent repression of the GLT operon. This chain is Protein GltF (gltF), found in Escherichia coli (strain K12).